We begin with the raw amino-acid sequence, 268 residues long: 5'-nucleotidase SurE (268 aa).

The a divalent metal cation site is built by Asp8, Asp9, Ser40, and Asn98.

It belongs to the SurE nucleotidase family. It depends on a divalent metal cation as a cofactor.

It localises to the cytoplasm. The enzyme catalyses a ribonucleoside 5'-phosphate + H2O = a ribonucleoside + phosphate. In terms of biological role, nucleotidase that shows phosphatase activity on nucleoside 5'-monophosphates. The protein is 5'-nucleotidase SurE of Trichodesmium erythraeum (strain IMS101).